A 479-amino-acid polypeptide reads, in one-letter code: UDP-N-acetylmuramate--L-alanine ligase (479 aa).

124–130 (GSHGKTT) contacts ATP.

This sequence belongs to the MurCDEF family.

It is found in the cytoplasm. The catalysed reaction is UDP-N-acetyl-alpha-D-muramate + L-alanine + ATP = UDP-N-acetyl-alpha-D-muramoyl-L-alanine + ADP + phosphate + H(+). It participates in cell wall biogenesis; peptidoglycan biosynthesis. Cell wall formation. The chain is UDP-N-acetylmuramate--L-alanine ligase from Synechococcus sp. (strain RCC307).